Consider the following 336-residue polypeptide: Dihydroorotate dehydrogenase (quinone) (336 aa).

Residues 62-66 (AGLDK) and threonine 86 contribute to the FMN site. Lysine 66 contributes to the substrate binding site. Position 111–115 (111–115 (NRMGF)) interacts with substrate. The FMN site is built by asparagine 139 and asparagine 172. Residue asparagine 172 participates in substrate binding. Serine 175 (nucleophile) is an active-site residue. Residue asparagine 177 participates in substrate binding. Positions 217 and 245 each coordinate FMN. 246 to 247 (NT) is a binding site for substrate. FMN contacts are provided by residues glycine 268, glycine 297, and 318 to 319 (YS).

Belongs to the dihydroorotate dehydrogenase family. Type 2 subfamily. In terms of assembly, monomer. Requires FMN as cofactor.

It localises to the cell membrane. The catalysed reaction is (S)-dihydroorotate + a quinone = orotate + a quinol. It functions in the pathway pyrimidine metabolism; UMP biosynthesis via de novo pathway; orotate from (S)-dihydroorotate (quinone route): step 1/1. Functionally, catalyzes the conversion of dihydroorotate to orotate with quinone as electron acceptor. This chain is Dihydroorotate dehydrogenase (quinone), found in Psychromonas ingrahamii (strain DSM 17664 / CCUG 51855 / 37).